Consider the following 244-residue polypeptide: CTD nuclear envelope phosphatase 1 (244 aa).

Residues Leu7–Arg29 traverse the membrane as a helical segment. The FCP1 homology domain maps to Gln58–Arg225.

Belongs to the dullard family. Interacts with bmpr1a, bmpr1b and bmpr2.

It is found in the membrane. It localises to the cytoplasm. The protein localises to the perinuclear region. The catalysed reaction is O-phospho-L-seryl-[protein] + H2O = L-seryl-[protein] + phosphate. It carries out the reaction O-phospho-L-threonyl-[protein] + H2O = L-threonyl-[protein] + phosphate. Functionally, serine/threonine protein phosphatase that may dephosphorylate and activate lipins. Lipins are phosphatidate phosphatases that catalyze the conversion of phosphatidic acid to diacylglycerol and control the metabolism of fatty acids at different levels. May indirectly modulate the lipid composition of nuclear and/or endoplasmic reticulum membranes and be required for proper nuclear membrane morphology and/or dynamics. May also indirectly regulate the production of lipid droplets and triacylglycerol. Induces neuronal differentiation by antagonizing BMP signaling. Acts both by dephosphorylating BMPR1A and by promoting BMPR2 proteasomal degradation. In Xenopus laevis (African clawed frog), this protein is CTD nuclear envelope phosphatase 1 (ctdnep1).